Consider the following 581-residue polypeptide: Arginine--tRNA ligase (581 aa).

The short motif at 126 to 136 (PNLAKEMHVGH) is the 'HIGH' region element.

Belongs to the class-I aminoacyl-tRNA synthetase family. As to quaternary structure, monomer.

Its subcellular location is the cytoplasm. It catalyses the reaction tRNA(Arg) + L-arginine + ATP = L-arginyl-tRNA(Arg) + AMP + diphosphate. The polypeptide is Arginine--tRNA ligase (Shewanella oneidensis (strain ATCC 700550 / JCM 31522 / CIP 106686 / LMG 19005 / NCIMB 14063 / MR-1)).